The chain runs to 259 residues: Proliferating cell nuclear antigen (259 aa).

A DNA-binding region spans residues 61–80 (RCDRNIALGVNLTSLTKVLR). Lys164 is covalently cross-linked (Glycyl lysine isopeptide (Lys-Gly) (interchain with G-Cter in SUMO); alternate). Residue Lys164 forms a Glycyl lysine isopeptide (Lys-Gly) (interchain with G-Cter in ubiquitin); alternate linkage.

It belongs to the PCNA family. In terms of assembly, homotrimer. Monoubiquitinated on Lys-164 upon DNA damage, and then polyubiquitinated through 'Lys-63'-linkage.

It is found in the nucleus. Its function is as follows. This protein is an auxiliary protein of DNA polymerase delta and is involved in the control of eukaryotic DNA replication by increasing the polymerase's processibility during elongation of the leading strand. Involved in DNA repair. This is Proliferating cell nuclear antigen from Chaetomium thermophilum (strain DSM 1495 / CBS 144.50 / IMI 039719) (Thermochaetoides thermophila).